The following is a 156-amino-acid chain: Transcription antitermination protein NusB (156 aa).

The protein belongs to the NusB family.

Its function is as follows. Involved in transcription antitermination. Required for transcription of ribosomal RNA (rRNA) genes. Binds specifically to the boxA antiterminator sequence of the ribosomal RNA (rrn) operons. The polypeptide is Transcription antitermination protein NusB (Xanthomonas oryzae pv. oryzae (strain MAFF 311018)).